The chain runs to 445 residues: Tubulin beta-9 chain (445 aa).

8 residues coordinate GTP: Gln-11, Glu-69, Ser-138, Gly-142, Thr-143, Gly-144, Asn-204, and Asn-226. A Mg(2+)-binding site is contributed by Glu-69. A disordered region spans residues 423-445 (QQYQDATADDEEYEEEEEYEAEA). Residues 429-445 (TADDEEYEEEEEYEAEA) are compositionally biased toward acidic residues.

Belongs to the tubulin family. As to quaternary structure, dimer of alpha and beta chains. A typical microtubule is a hollow water-filled tube with an outer diameter of 25 nm and an inner diameter of 15 nM. Alpha-beta heterodimers associate head-to-tail to form protofilaments running lengthwise along the microtubule wall with the beta-tubulin subunit facing the microtubule plus end conferring a structural polarity. Microtubules usually have 13 protofilaments but different protofilament numbers can be found in some organisms and specialized cells. Requires Mg(2+) as cofactor.

It is found in the cytoplasm. Its subcellular location is the cytoskeleton. In terms of biological role, tubulin is the major constituent of microtubules, a cylinder consisting of laterally associated linear protofilaments composed of alpha- and beta-tubulin heterodimers. Microtubules grow by the addition of GTP-tubulin dimers to the microtubule end, where a stabilizing cap forms. Below the cap, tubulin dimers are in GDP-bound state, owing to GTPase activity of alpha-tubulin. The chain is Tubulin beta-9 chain from Gossypium hirsutum (Upland cotton).